A 96-amino-acid chain; its full sequence is Putative septation protein SpoVG (96 aa).

The protein belongs to the SpoVG family.

Functionally, could be involved in septation. The chain is Putative septation protein SpoVG from Phytoplasma australiense.